The chain runs to 218 residues: Transmembrane gamma-carboxyglutamic acid protein 1 (218 aa).

The propeptide occupies 1 to 20 (MGRVFLTGEKANSILKRYPR). Positions 21-66 (ANGFFEEIRQGNIERECKEEFCTFEEAREAFENNEKTKEFWSTYTK) constitute a Gla domain. The Extracellular portion of the chain corresponds to 21–83 (ANGFFEEIRQ…RGSDWFQFYL (63 aa)). Cysteines 37 and 42 form a disulfide. The chain crosses the membrane as a helical span at residues 84 to 106 (TFPLIFGLFIILLVIFLIWRCFL). The Cytoplasmic portion of the chain corresponds to 107-218 (RNKTRRQTVT…PMVPVVTTIK (112 aa)). Residues 161 to 195 (TRLSNCDPPPTYEEATGQVNLQRSETEPHLDPPPE) are disordered.

Post-translationally, gla residues are produced after subsequent post-translational modifications of glutamate by a vitamin K-dependent gamma-carboxylase. As to expression, highly expressed in the spinal cord.

The protein resides in the membrane. This chain is Transmembrane gamma-carboxyglutamic acid protein 1 (PRRG1), found in Homo sapiens (Human).